Here is a 364-residue protein sequence, read N- to C-terminus: MKVVIEADGGSRGNPGPAGYGAVVWTADHSTVLAESKQAIGRATNNVAEYRGLIAGLDDAVKLGATEAAVLMDSKLVVEQMSGRWKVKHPDLLKLYVQAQALASQFRRINYEWVPRARNTYADRLANDAMDAAAQSAAADADPAKIVATESPTSPGWTGARGTPTRLLLLRHGQTELSEQRRYSGRGNPGLNEVGWRQVGAAAGYLARRGGIAAVVSSPLQRAYDTAVTAARALALDVVVDDDLVETDFGAWEGLTFAEAAERDPELHRRWLQDTSITPPGGESFDDVLRRVRRGRDRIIVGYEGATVLVVSHVTPIKMLLRLALDAGSGVLYRLHLDLASLSIAEFYADGASSVRLVNQTGYL.

Residues 1-139 (MKVVIEADGG…MDAAAQSAAA (139 aa)) enclose the RNase H type-1 domain. The Mg(2+) site is built by Asp8, Glu49, Asp73, and Asp123. His172 serves as the catalytic Tele-phosphohistidine intermediate. The Proton donor/acceptor; for phosphatase activity role is filled by Glu246.

It in the N-terminal section; belongs to the RNase H family. In the C-terminal section; belongs to the histidine phosphatase superfamily. The N-terminal domain alone is monomeric in solution but associates in the crystal to form a dimer. Mg(2+) serves as cofactor.

The enzyme catalyses Endonucleolytic cleavage to 5'-phosphomonoester.. It carries out the reaction adenosylcob(III)alamin 5'-phosphate + H2O = adenosylcob(III)alamin + phosphate. It catalyses the reaction alpha-ribazole 5'-phosphate + H2O = alpha-ribazole + phosphate. It participates in nucleoside biosynthesis; alpha-ribazole biosynthesis; alpha-ribazole from 5,6-dimethylbenzimidazole: step 2/2. Functionally, endonuclease that displays both RNase H activity with a hybrid RNA/DNA substrate as well as double-stranded RNase activity. As the only authenticated RNase HI in M.tuberculosis, probably plays an important role in the physiology of this organism, being likely involved in bacterial replication. In terms of biological role, catalyzes the hydrolysis of the phospho group from alpha-ribazole 5'-phosphate to form alpha-ribazole. May also catalyze the conversion of adenosylcobalamin 5'-phosphate to adenosylcobalamin (vitamin B12). Has a possible role in B12 recycling, but the primary role of the C-terminal domain of this phosphatase enzyme could be phosphate generation to help bacterial survival within the macrophage, which is a phosphate-deprived environment. The protein is Bifunctional protein Rv2228c of Mycobacterium tuberculosis (strain ATCC 25618 / H37Rv).